The sequence spans 403 residues: Methylthioribose-1-phosphate isomerase (403 aa).

Asp280 functions as the Proton donor in the catalytic mechanism.

It belongs to the eIF-2B alpha/beta/delta subunits family. MtnA subfamily.

The protein localises to the cytoplasm. The protein resides in the nucleus. It catalyses the reaction 5-(methylsulfanyl)-alpha-D-ribose 1-phosphate = 5-(methylsulfanyl)-D-ribulose 1-phosphate. The protein operates within amino-acid biosynthesis; L-methionine biosynthesis via salvage pathway; L-methionine from S-methyl-5-thio-alpha-D-ribose 1-phosphate: step 1/6. Its function is as follows. Catalyzes the interconversion of methylthioribose-1-phosphate (MTR-1-P) into methylthioribulose-1-phosphate (MTRu-1-P). The polypeptide is Methylthioribose-1-phosphate isomerase (Eremothecium gossypii (strain ATCC 10895 / CBS 109.51 / FGSC 9923 / NRRL Y-1056) (Yeast)).